A 288-amino-acid chain; its full sequence is Elongation factor Ts (288 aa).

The tract at residues 82-85 (TDFV) is involved in Mg(2+) ion dislocation from EF-Tu.

The protein belongs to the EF-Ts family.

It is found in the cytoplasm. Associates with the EF-Tu.GDP complex and induces the exchange of GDP to GTP. It remains bound to the aminoacyl-tRNA.EF-Tu.GTP complex up to the GTP hydrolysis stage on the ribosome. The polypeptide is Elongation factor Ts (Chlorobium limicola (strain DSM 245 / NBRC 103803 / 6330)).